Reading from the N-terminus, the 1606-residue chain is Pentafunctional AROM polypeptide (1606 aa).

Residues 1–390 form a 3-dehydroquinate synthase region; the sequence is MANADVLKVS…YEPKATVVPD (390 aa). Residues 45–47, 85–88, 116–118, and D121 each bind NAD(+); these read DTN, ETSK, and GGV. Position 132 (R132) interacts with 7-phospho-2-dehydro-3-deoxy-D-arabino-heptonate. An NAD(+)-binding site is contributed by 141–142; sequence TT. 7-phospho-2-dehydro-3-deoxy-D-arabino-heptonate contacts are provided by D148 and K154. K163 serves as a coordination point for NAD(+). N164 lines the 7-phospho-2-dehydro-3-deoxy-D-arabino-heptonate pocket. Residues 181 to 184 and N192 each bind NAD(+); that span reads FLET. E196 contributes to the Zn(2+) binding site. 7-phospho-2-dehydro-3-deoxy-D-arabino-heptonate contacts are provided by residues 196–199 and K256; that span reads EVVK. E266 (proton acceptor; for 3-dehydroquinate synthase activity) is an active-site residue. 7-phospho-2-dehydro-3-deoxy-D-arabino-heptonate-binding positions include 270-274 and H277; that span reads RNLVN. H277 contacts Zn(2+). The active-site Proton acceptor; for 3-dehydroquinate synthase activity is H281. Residues H293 and K362 each coordinate 7-phospho-2-dehydro-3-deoxy-D-arabino-heptonate. Residue H293 coordinates Zn(2+). Residues 403–850 form an EPSP synthase region; that stretch reads VIPGVPRHHP…WDDLENKIGL (448 aa). C832 acts as the For EPSP synthase activity in catalysis. The segment at 875 to 1070 is shikimate kinase; that stretch reads AASIILIGMR…TSGRRSYFLC (196 aa). 882-889 provides a ligand contact to ATP; sequence GMRGTGKT. Positions 1071–1296 are 3-dehydroquinase; it reads LTYPDVTQSF…AAPGQLSFKQ (226 aa). H1198 functions as the Proton acceptor; for 3-dehydroquinate dehydratase activity in the catalytic mechanism. The active-site Schiff-base intermediate with substrate; for 3-dehydroquinate dehydratase activity is the K1226. The segment at 1309-1606 is shikimate dehydrogenase; it reads AQRFYLFGTP…QFVFEEECES (298 aa).

The protein in the N-terminal section; belongs to the sugar phosphate cyclases superfamily. Dehydroquinate synthase family. In the 2nd section; belongs to the EPSP synthase family. It in the 3rd section; belongs to the shikimate kinase family. This sequence in the 4th section; belongs to the type-I 3-dehydroquinase family. The protein in the C-terminal section; belongs to the shikimate dehydrogenase family. Homodimer. It depends on Zn(2+) as a cofactor.

The protein resides in the cytoplasm. It catalyses the reaction 7-phospho-2-dehydro-3-deoxy-D-arabino-heptonate = 3-dehydroquinate + phosphate. The enzyme catalyses 3-dehydroquinate = 3-dehydroshikimate + H2O. It carries out the reaction shikimate + NADP(+) = 3-dehydroshikimate + NADPH + H(+). The catalysed reaction is shikimate + ATP = 3-phosphoshikimate + ADP + H(+). It catalyses the reaction 3-phosphoshikimate + phosphoenolpyruvate = 5-O-(1-carboxyvinyl)-3-phosphoshikimate + phosphate. The protein operates within metabolic intermediate biosynthesis; chorismate biosynthesis; chorismate from D-erythrose 4-phosphate and phosphoenolpyruvate: step 2/7. It participates in metabolic intermediate biosynthesis; chorismate biosynthesis; chorismate from D-erythrose 4-phosphate and phosphoenolpyruvate: step 3/7. It functions in the pathway metabolic intermediate biosynthesis; chorismate biosynthesis; chorismate from D-erythrose 4-phosphate and phosphoenolpyruvate: step 4/7. Its pathway is metabolic intermediate biosynthesis; chorismate biosynthesis; chorismate from D-erythrose 4-phosphate and phosphoenolpyruvate: step 5/7. The protein operates within metabolic intermediate biosynthesis; chorismate biosynthesis; chorismate from D-erythrose 4-phosphate and phosphoenolpyruvate: step 6/7. Its function is as follows. The AROM polypeptide catalyzes 5 consecutive enzymatic reactions in prechorismate polyaromatic amino acid biosynthesis. The sequence is that of Pentafunctional AROM polypeptide from Laccaria bicolor (strain S238N-H82 / ATCC MYA-4686) (Bicoloured deceiver).